Consider the following 409-residue polypeptide: Peptidase T (409 aa).

His-78 provides a ligand contact to Zn(2+). Residue Asp-80 is part of the active site. Residue Asp-140 participates in Zn(2+) binding. The active-site Proton acceptor is the Glu-173. Zn(2+)-binding residues include Glu-174, Asp-196, and His-379.

It belongs to the peptidase M20B family. It depends on Zn(2+) as a cofactor.

The protein resides in the cytoplasm. It carries out the reaction Release of the N-terminal residue from a tripeptide.. Functionally, cleaves the N-terminal amino acid of tripeptides. This is Peptidase T from Salmonella agona (strain SL483).